The sequence spans 451 residues: Phosphoglucosamine mutase (451 aa).

The Phosphoserine intermediate role is filled by Ser102. Residues Ser102, Asp242, Asp244, and Asp246 each contribute to the Mg(2+) site. Ser102 bears the Phosphoserine mark.

Belongs to the phosphohexose mutase family. Mg(2+) serves as cofactor. Activated by phosphorylation.

The enzyme catalyses alpha-D-glucosamine 1-phosphate = D-glucosamine 6-phosphate. Catalyzes the conversion of glucosamine-6-phosphate to glucosamine-1-phosphate. The sequence is that of Phosphoglucosamine mutase from Staphylococcus carnosus (strain TM300).